The primary structure comprises 401 residues: N-acetyllactosaminide beta-1,6-N-acetylglucosaminyl-transferase (401 aa).

Residues 1–7 (MPPSVRY) lie on the Cytoplasmic side of the membrane. A helical; Signal-anchor for type II membrane protein transmembrane segment spans residues 8–28 (FFIVSVTTVIVFIVLYVLSFG). The Lumenal portion of the chain corresponds to 29–401 (GDQSYQKLNI…EIAIQPSWYF (373 aa)). N-linked (GlcNAc...) asparagine glycans are attached at residues Asn37, Asn255, Asn315, and Asn389.

Belongs to the glycosyltransferase 14 family.

Its subcellular location is the golgi apparatus membrane. It carries out the reaction a beta-D-Gal-(1-&gt;4)-beta-D-GlcNAc-(1-&gt;3)-beta-D-Gal-(1-&gt;4)-beta-D-GlcNAc derivative + UDP-N-acetyl-alpha-D-glucosamine = a beta-D-Gal-(1-&gt;4)-beta-D-GlcNAc-(1-&gt;3)-[beta-D-GlcNAc-(1-&gt;6)]-beta-D-Gal-(1-&gt;4)-N-acetyl-beta-D-glucosaminyl derivative + UDP + H(+). The protein operates within protein modification; protein glycosylation. Branching enzyme that converts linear into branched poly-N-acetyllactosaminoglycans. Introduces the blood group I antigen during embryonic development. It is closely associated with the development and maturation of erythroid cells. In Mus musculus (Mouse), this protein is N-acetyllactosaminide beta-1,6-N-acetylglucosaminyl-transferase (Gcnt2).